We begin with the raw amino-acid sequence, 280 residues long: Bifunctional protein FolD (280 aa).

NADP(+) contacts are provided by residues 161–163 (GRS), serine 186, and isoleucine 227.

It belongs to the tetrahydrofolate dehydrogenase/cyclohydrolase family. As to quaternary structure, homodimer.

It carries out the reaction (6R)-5,10-methylene-5,6,7,8-tetrahydrofolate + NADP(+) = (6R)-5,10-methenyltetrahydrofolate + NADPH. The enzyme catalyses (6R)-5,10-methenyltetrahydrofolate + H2O = (6R)-10-formyltetrahydrofolate + H(+). Its pathway is one-carbon metabolism; tetrahydrofolate interconversion. Catalyzes the oxidation of 5,10-methylenetetrahydrofolate to 5,10-methenyltetrahydrofolate and then the hydrolysis of 5,10-methenyltetrahydrofolate to 10-formyltetrahydrofolate. This chain is Bifunctional protein FolD, found in Caldanaerobacter subterraneus subsp. tengcongensis (strain DSM 15242 / JCM 11007 / NBRC 100824 / MB4) (Thermoanaerobacter tengcongensis).